The sequence spans 141 residues: NADH dehydrogenase [ubiquinone] 1 alpha subcomplex subunit 11 (141 aa).

Alanine 2 is subject to N-acetylalanine. The next 2 membrane-spanning stretches (helical) occupy residues threonine 22–leucine 43 and arginine 58–valine 80.

As to quaternary structure, complex I is composed of 45 different subunits.

The protein localises to the mitochondrion inner membrane. Its function is as follows. Accessory subunit of the mitochondrial membrane respiratory chain NADH dehydrogenase (Complex I), that is believed not to be involved in catalysis. Complex I functions in the transfer of electrons from NADH to the respiratory chain. The immediate electron acceptor for the enzyme is believed to be ubiquinone. The protein is NADH dehydrogenase [ubiquinone] 1 alpha subcomplex subunit 11 (NDUFA11) of Bos taurus (Bovine).